Reading from the N-terminus, the 128-residue chain is Leucine-rich single-pass membrane protein 1 (128 aa).

Phosphoserine is present on Ser-24. A helical membrane pass occupies residues 65–85 (VGLIIVLIISLALVSFVIFLI). Residues 87-111 (QTENKMEDVSRRLAAEGKDIDDLKK) are a coiled coil.

The protein resides in the membrane. The sequence is that of Leucine-rich single-pass membrane protein 1 (LSMEM1) from Bos taurus (Bovine).